We begin with the raw amino-acid sequence, 600 residues long: Arginine--tRNA ligase (600 aa).

L-arginine-binding positions include 151-153 (SPN), histidine 162, tyrosine 332, aspartate 336, and glutamine 360. The short motif at 152–162 (PNIAKEMHIGH) is the 'HIGH' region element.

The protein belongs to the class-I aminoacyl-tRNA synthetase family.

The catalysed reaction is tRNA(Arg) + L-arginine + ATP = L-arginyl-tRNA(Arg) + AMP + diphosphate. This chain is Arginine--tRNA ligase (RARS), found in Acanthamoeba polyphaga mimivirus (APMV).